A 475-amino-acid polypeptide reads, in one-letter code: Ataxin-10 (475 aa).

Position 10 is an omega-N-methylarginine (R10). S12 and S77 each carry phosphoserine. T82 is subject to Phosphothreonine. S430 carries the post-translational modification Phosphoserine.

The protein belongs to the ataxin-10 family. Homooligomer. Interacts with GNB2. Interacts with IQCB1. Interacts with OGT. In terms of processing, polyubiquitinated. Phosphorylation at Ser-12 by AURKB promotes the association of ATXN10 with PLK1. Phosphorylation at Ser-77 and Thr-82 by PLK1 may play a role in the regulation of cytokinesis and may stimulate the proteasome-mediated degradation of ATXN10.

Its subcellular location is the cytoplasm. It is found in the perinuclear region. It localises to the midbody. The protein localises to the cytoskeleton. The protein resides in the cilium basal body. Its subcellular location is the microtubule organizing center. It is found in the centrosome. It localises to the centriole. May play a role in the regulation of cytokinesis. May play a role in signaling by stimulating protein glycosylation. Induces neuritogenesis by activating the Ras-MAP kinase pathway and is necessary for the survival of cerebellar neurons. Does not appear to play a major role in ciliogenesis. The polypeptide is Ataxin-10 (ATXN10) (Macaca fascicularis (Crab-eating macaque)).